A 275-amino-acid chain; its full sequence is NH(3)-dependent NAD(+) synthetase (275 aa).

An ATP-binding site is contributed by 46–53 (GISGGQDS). A Mg(2+)-binding site is contributed by Asp-52. Arg-140 serves as a coordination point for deamido-NAD(+). An ATP-binding site is contributed by Thr-160. Glu-165 is a binding site for Mg(2+). Deamido-NAD(+) is bound by residues Lys-173 and Asp-180. ATP contacts are provided by Lys-189 and Thr-211. Residue 260 to 261 (HK) participates in deamido-NAD(+) binding.

Belongs to the NAD synthetase family. As to quaternary structure, homodimer.

It carries out the reaction deamido-NAD(+) + NH4(+) + ATP = AMP + diphosphate + NAD(+) + H(+). It functions in the pathway cofactor biosynthesis; NAD(+) biosynthesis; NAD(+) from deamido-NAD(+) (ammonia route): step 1/1. Functionally, catalyzes the ATP-dependent amidation of deamido-NAD to form NAD. Uses ammonia as a nitrogen source. This Escherichia coli O8 (strain IAI1) protein is NH(3)-dependent NAD(+) synthetase.